We begin with the raw amino-acid sequence, 287 residues long: Ribosomal RNA small subunit methyltransferase A (287 aa).

S-adenosyl-L-methionine-binding residues include Asn28, Leu30, Gly55, Glu77, Asp103, and Asn123.

It belongs to the class I-like SAM-binding methyltransferase superfamily. rRNA adenine N(6)-methyltransferase family. RsmA subfamily.

The protein resides in the cytoplasm. It catalyses the reaction adenosine(1518)/adenosine(1519) in 16S rRNA + 4 S-adenosyl-L-methionine = N(6)-dimethyladenosine(1518)/N(6)-dimethyladenosine(1519) in 16S rRNA + 4 S-adenosyl-L-homocysteine + 4 H(+). Functionally, specifically dimethylates two adjacent adenosines (A1518 and A1519) in the loop of a conserved hairpin near the 3'-end of 16S rRNA in the 30S particle. May play a critical role in biogenesis of 30S subunits. The protein is Ribosomal RNA small subunit methyltransferase A of Rhodopseudomonas palustris (strain HaA2).